The following is a 198-amino-acid chain: Large ribosomal subunit protein uL24c (198 aa).

The transit peptide at M1–A50 directs the protein to the chloroplast.

Belongs to the universal ribosomal protein uL24 family. As to quaternary structure, part of the 50S ribosomal subunit.

It localises to the plastid. Its subcellular location is the chloroplast. In terms of biological role, one of two assembly initiator proteins, it binds directly to the 5'-end of the 23S rRNA, where it nucleates assembly of the 50S subunit. Required for optimal plastid performance in terms of photosynthesis and growth. Required for the translation of plastid mRNAs. Plays a critical role in biosynthesis of thylakoid membrane proteins encoded by chloroplast genes. The protein is Large ribosomal subunit protein uL24c (RPL24) of Arabidopsis thaliana (Mouse-ear cress).